We begin with the raw amino-acid sequence, 344 residues long: DNA-directed RNA polymerase subunit alpha (344 aa).

The segment at 1–238 is alpha N-terminal domain (alpha-NTD); sequence MKVIKTAPLI…KQLGVFGEKP (238 aa). An alpha C-terminal domain (alpha-CTD) region spans residues 253 to 344; the sequence is DAKDLSAKIE…EKLEDKGGND (92 aa).

The protein belongs to the RNA polymerase alpha chain family. Homodimer. The RNAP catalytic core consists of 2 alpha, 1 beta, 1 beta' and 1 omega subunit. When a sigma factor is associated with the core the holoenzyme is formed, which can initiate transcription.

It catalyses the reaction RNA(n) + a ribonucleoside 5'-triphosphate = RNA(n+1) + diphosphate. In terms of biological role, DNA-dependent RNA polymerase catalyzes the transcription of DNA into RNA using the four ribonucleoside triphosphates as substrates. The protein is DNA-directed RNA polymerase subunit alpha of Helicobacter acinonychis (strain Sheeba).